The following is a 505-amino-acid chain: GDP-Man:Man(3)GlcNAc(2)-PP-Dol alpha-1,2-mannosyltransferase (505 aa).

Residues 1-3 (MDE) are Lumenal-facing. The chain crosses the membrane as a helical span at residues 4–24 (LIMMVFVLFTIVLLLTVSMTL). The Cytoplasmic portion of the chain corresponds to 25–145 (AALISTIVVL…KWVEASTYPR (121 aa)). The segment at residues 146–166 (FTLIGQSLGSMILGWEALTKF) is an intramembrane region (helical). Residues 167-402 (VPTIFLDSMG…VGIHTMYNEH (236 aa)) are Cytoplasmic-facing. The segment at residues 403–423 (FGIGVVELMAAGVIPVANNSA) is an intramembrane region (helical). Residues 424 to 505 (GPKEDIVRHE…NNNSSSKKRN (82 aa)) are Cytoplasmic-facing.

This sequence belongs to the glycosyltransferase group 1 family.

The protein resides in the endoplasmic reticulum membrane. The catalysed reaction is an alpha-D-Man-(1-&gt;3)-[alpha-D-Man-(1-&gt;6)]-beta-D-Man-(1-&gt;4)-beta-D-GlcNAc-(1-&gt;4)-alpha-D-GlcNAc-diphospho-di-trans,poly-cis-dolichol + 2 GDP-alpha-D-mannose = an alpha-D-Man-(1-&gt;2)-alpha-D-Man-(1-&gt;2)-alpha-D-Man-(1-&gt;3)-[alpha-D-Man-(1-&gt;6)]-beta-D-Man-(1-&gt;4)-beta-D-GlcNAc-(1-&gt;4)-alpha-D-GlcNAc-diphospho-di-trans,poly-cis-dolichol + 2 GDP + 2 H(+). It functions in the pathway protein modification; protein glycosylation. Functionally, GDP-Man:Man(3)GlcNAc(2)-PP-Dol alpha-1,2-mannosyltransferase that operates in the biosynthetic pathway of dolichol-linked oligosaccharides, the glycan precursors employed in protein asparagine (N)-glycosylation. The assembly of dolichol-linked oligosaccharides begins on the cytosolic side of the endoplasmic reticulum membrane and finishes in its lumen. The sequential addition of sugars to dolichol pyrophosphate produces dolichol-linked oligosaccharides containing fourteen sugars, including two GlcNAcs, nine mannoses and three glucoses. Once assembled, the oligosaccharide is transferred from the lipid to nascent proteins by oligosaccharyltransferases. Catalyzes, on the cytoplasmic face of the endoplasmic reticulum, the addition of the fourth and fifth mannose residues to the dolichol-linked oligosaccharide chain, to produce Man(5)GlcNAc(2)-PP-dolichol core oligosaccharide. In Dictyostelium discoideum (Social amoeba), this protein is GDP-Man:Man(3)GlcNAc(2)-PP-Dol alpha-1,2-mannosyltransferase (alg11).